A 545-amino-acid chain; its full sequence is Chaperonin GroEL (545 aa).

ATP contacts are provided by residues 29–32, Lys50, 86–90, Gly414, 477–479, and Asp493; these read TMGP, DGTTT, and DAA.

The protein belongs to the chaperonin (HSP60) family. Forms a cylinder of 14 subunits composed of two heptameric rings stacked back-to-back. Interacts with the co-chaperonin GroES.

It is found in the cytoplasm. The enzyme catalyses ATP + H2O + a folded polypeptide = ADP + phosphate + an unfolded polypeptide.. In terms of biological role, together with its co-chaperonin GroES, plays an essential role in assisting protein folding. The GroEL-GroES system forms a nano-cage that allows encapsulation of the non-native substrate proteins and provides a physical environment optimized to promote and accelerate protein folding. The chain is Chaperonin GroEL from Campylobacter jejuni (strain RM1221).